The primary structure comprises 368 residues: UDP-N-acetylglucosamine--N-acetylmuramyl-(pentapeptide) pyrophosphoryl-undecaprenol N-acetylglucosamine transferase (368 aa).

Residues 11-13, asparagine 123, arginine 164, serine 188, isoleucine 250, and glutamine 295 contribute to the UDP-N-acetyl-alpha-D-glucosamine site; that span reads TGG.

This sequence belongs to the glycosyltransferase 28 family. MurG subfamily.

It is found in the cell inner membrane. It carries out the reaction di-trans,octa-cis-undecaprenyl diphospho-N-acetyl-alpha-D-muramoyl-L-alanyl-D-glutamyl-meso-2,6-diaminopimeloyl-D-alanyl-D-alanine + UDP-N-acetyl-alpha-D-glucosamine = di-trans,octa-cis-undecaprenyl diphospho-[N-acetyl-alpha-D-glucosaminyl-(1-&gt;4)]-N-acetyl-alpha-D-muramoyl-L-alanyl-D-glutamyl-meso-2,6-diaminopimeloyl-D-alanyl-D-alanine + UDP + H(+). Its pathway is cell wall biogenesis; peptidoglycan biosynthesis. Functionally, cell wall formation. Catalyzes the transfer of a GlcNAc subunit on undecaprenyl-pyrophosphoryl-MurNAc-pentapeptide (lipid intermediate I) to form undecaprenyl-pyrophosphoryl-MurNAc-(pentapeptide)GlcNAc (lipid intermediate II). The protein is UDP-N-acetylglucosamine--N-acetylmuramyl-(pentapeptide) pyrophosphoryl-undecaprenol N-acetylglucosamine transferase of Solidesulfovibrio magneticus (strain ATCC 700980 / DSM 13731 / RS-1) (Desulfovibrio magneticus).